The following is a 150-amino-acid chain: Cell division protein SepF (150 aa).

It belongs to the SepF family. Homodimer. Interacts with FtsZ.

It localises to the cytoplasm. Functionally, cell division protein that is part of the divisome complex and is recruited early to the Z-ring. Probably stimulates Z-ring formation, perhaps through the cross-linking of FtsZ protofilaments. Its function overlaps with FtsA. This chain is Cell division protein SepF, found in Clostridium beijerinckii (strain ATCC 51743 / NCIMB 8052) (Clostridium acetobutylicum).